Here is a 431-residue protein sequence, read N- to C-terminus: tRNA (adenine(37)-N6)-methyltransferase (431 aa).

In terms of domain architecture, TsaA-like spans 30 to 168; sequence TEPIGYLESC…YIADYDSPQN (139 aa). S-adenosyl-L-methionine is bound by residues 47–49, 90–91, R117, L127, and 148–151; these read PRQ, HK, and IDGT. Residues 196 to 242 are disordered; the sequence is LSGRGKVQPRQSTKERPKCLEDRTSGENSQKSRDMSEIQHTLPEDRE. Basic and acidic residues predominate over residues 207-242; that stretch reads STKERPKCLEDRTSGENSQKSRDMSEIQHTLPEDRE.

This sequence belongs to the tRNA methyltransferase O family.

The catalysed reaction is N(6)-L-threonylcarbamoyladenosine(37) in tRNA + S-adenosyl-L-methionine = N(6)-methyl,N(6)-L-threonylcarbamoyladenosine(37) in tRNA + S-adenosyl-L-homocysteine + H(+). Its function is as follows. S-adenosyl-L-methionine-dependent methyltransferase responsible for the addition of the methyl group in the formation of N6-methyl-N6-threonylcarbamoyladenosine at position 37 (m(6)t(6)A37) of the tRNA anticodon loop of tRNA(Ser)(GCU). The methyl group of m(6)t(6)A37 may improve the efficiency of the tRNA decoding ability. May bind to tRNA. The sequence is that of tRNA (adenine(37)-N6)-methyltransferase from Mus musculus (Mouse).